The sequence spans 156 residues: Small ribosomal subunit protein uS7 (156 aa).

This sequence belongs to the universal ribosomal protein uS7 family. As to quaternary structure, part of the 30S ribosomal subunit. Contacts proteins S9 and S11.

Its function is as follows. One of the primary rRNA binding proteins, it binds directly to 16S rRNA where it nucleates assembly of the head domain of the 30S subunit. Is located at the subunit interface close to the decoding center, probably blocks exit of the E-site tRNA. This is Small ribosomal subunit protein uS7 from Carsonella ruddii (strain PV).